Reading from the N-terminus, the 214-residue chain is Octanoyltransferase (214 aa).

Residues 32 to 207 (EDTLDEIWLV…NLLALLNHPP (176 aa)) form the BPL/LPL catalytic domain. Residues 71–78 (RGGQVTYH), 138–140 (SLG), and 151–153 (GLA) each bind substrate. The Acyl-thioester intermediate role is filled by Cys-169.

It belongs to the LipB family.

The protein resides in the cytoplasm. It catalyses the reaction octanoyl-[ACP] + L-lysyl-[protein] = N(6)-octanoyl-L-lysyl-[protein] + holo-[ACP] + H(+). Its pathway is protein modification; protein lipoylation via endogenous pathway; protein N(6)-(lipoyl)lysine from octanoyl-[acyl-carrier-protein]: step 1/2. Its function is as follows. Catalyzes the transfer of endogenously produced octanoic acid from octanoyl-acyl-carrier-protein onto the lipoyl domains of lipoate-dependent enzymes. Lipoyl-ACP can also act as a substrate although octanoyl-ACP is likely to be the physiological substrate. This Klebsiella pneumoniae (strain 342) protein is Octanoyltransferase.